A 178-amino-acid polypeptide reads, in one-letter code: MGFGSFISTITYCLFFRYPHKKPKFKSVSHLNHYHTMPMARPLSLQTIDLKVRMCCSGCERVVKHAIYKLRGVDSVEVNLEMERVTVVGYVERKKVLKAVRRAGKRAEFWPYPDMPRYFTSSDHYFKDTTREFRESYNYYRHGYNLSDRHGNIHVTNRGDDKMSNFFNDDNVHACSLM.

An HMA domain is found at 45 to 108 (LQTIDLKVRM…AVRRAGKRAE (64 aa)). A metal cation-binding residues include cysteine 56 and cysteine 59. The residue at position 175 (cysteine 175) is a Cysteine methyl ester. A lipid anchor (S-farnesyl cysteine) is attached at cysteine 175. Residues 176-178 (SLM) constitute a propeptide, removed in mature form.

The protein belongs to the HIPP family. In terms of assembly, interacts with ZHD3/HB21, ZHD11/HB29 and ZHD8/HB30.

Heavy-metal-binding protein. The chain is Heavy metal-associated isoprenylated plant protein 30 from Arabidopsis thaliana (Mouse-ear cress).